Reading from the N-terminus, the 77-residue chain is U8-lycotoxin-Ls1j (77 aa).

Positions 1–20 (MKLIIFTGLILFAIVSLIEA) are cleaved as a signal peptide. Positions 21 to 26 (QANNEK) are excised as a propeptide.

It belongs to the neurotoxin 19 (CSTX) family. 08 (U8-Lctx) subfamily. In terms of processing, contains 4 disulfide bonds. As to expression, expressed by the venom gland.

The protein localises to the secreted. The polypeptide is U8-lycotoxin-Ls1j (Lycosa singoriensis (Wolf spider)).